A 164-amino-acid chain; its full sequence is Cell division protein SepF (164 aa).

A disordered region spans residues 21–71 (YQQGQQPAQQQQSPVQAVPTPVPAPQQQAKRAPVTPLHKPSTTTRNAAPAE). Positions 22–49 (QQGQQPAQQQQSPVQAVPTPVPAPQQQA) are enriched in low complexity.

Belongs to the SepF family. In terms of assembly, homodimer. Interacts with FtsZ.

The protein localises to the cytoplasm. Its function is as follows. Cell division protein that is part of the divisome complex and is recruited early to the Z-ring. Probably stimulates Z-ring formation, perhaps through the cross-linking of FtsZ protofilaments. Its function overlaps with FtsA. This chain is Cell division protein SepF, found in Clavibacter sepedonicus (Clavibacter michiganensis subsp. sepedonicus).